Reading from the N-terminus, the 300-residue chain is MRVLSEIAESPFVISRLSPDSTATGGFIGGWVGKCHGFLHNTVLVLASILFVAYLAYEAKKSLSKLSNRRSYIMIAYYGFLWLVSLLNLAWCCLQAWECTPGKEVIWNLLTLFTTSGMLFLEVSLVAFLFQGNYASGAEALTRTFLISGLVIGLDLLLKAIYLFGFGVPLFIDNNEHIHKFKWGLWVIHKLLLAGIYGMIFFMYNSKWRERLPARPAFYKYITVMLALNGLSLFACALTANGAHFGLWLYGITSVCYHAFYLPLLYVTFLADFFQEEDLNLENVYYSEMKDAGFFDADWE.

Transmembrane regions (helical) follow at residues 37 to 57, 73 to 93, 110 to 130, 152 to 172, 183 to 203, 222 to 242, and 245 to 265; these read GFLH…YLAY, IMIA…AWCC, LTLF…AFLF, IGLD…PLFI, WGLW…IFFM, ITVM…TANG, and FGLW…LPLL.

The protein belongs to the UPF0359 family. In terms of assembly, interacts with GPA1. As to expression, expressed at low levels in seedlings.

It localises to the cell membrane. Plays a role in plants and microbes interactions. G-protein coupled melatonin receptor involved in root growth mediated by the bacterial quorum-sensing signals N-acyl-homoserine lactones (AHLs). Binds to melatonin. Phytomelatonin receptor required, in collaboration with GPA1, for melatonin-mediated stomatal closure involving H(2)O(2) and Ca(2+) signals. Essential for melatonin-mediated plant response to osmotic stress probably by activating reactive oxygen species (ROS) scavenging ability. This is Protein CANDIDATE G-PROTEIN COUPLED RECEPTOR 2 from Arabidopsis thaliana (Mouse-ear cress).